The sequence spans 414 residues: L-cysteine:1D-myo-inositol 2-amino-2-deoxy-alpha-D-glucopyranoside ligase (414 aa).

The tract at residues Met-1–Arg-38 is disordered. Residues Asn-11–Arg-38 are compositionally biased toward low complexity. Cys-48 is a Zn(2+) binding site. L-cysteinyl-5'-AMP contacts are provided by residues Cys-48–Thr-51, Thr-63, and Asn-86–Thr-88. Positions Ile-50–His-60 match the 'HIGH' region motif. Residues Glu-188–Pro-193 carry the 'ERGGDP' region motif. Residue Trp-228 participates in L-cysteinyl-5'-AMP binding. Zn(2+) is bound at residue Cys-232. L-cysteinyl-5'-AMP is bound at residue Gly-250–Asp-252. Position 257 (His-257) interacts with Zn(2+). Val-284 is a binding site for L-cysteinyl-5'-AMP. The short motif at Lys-290–Ser-294 is the 'KMSKS' region element.

Belongs to the class-I aminoacyl-tRNA synthetase family. MshC subfamily. As to quaternary structure, monomer. Zn(2+) is required as a cofactor.

The catalysed reaction is 1D-myo-inositol 2-amino-2-deoxy-alpha-D-glucopyranoside + L-cysteine + ATP = 1D-myo-inositol 2-(L-cysteinylamino)-2-deoxy-alpha-D-glucopyranoside + AMP + diphosphate + H(+). Its function is as follows. Catalyzes the ATP-dependent condensation of GlcN-Ins and L-cysteine to form L-Cys-GlcN-Ins. This is L-cysteine:1D-myo-inositol 2-amino-2-deoxy-alpha-D-glucopyranoside ligase from Thermomonospora curvata (strain ATCC 19995 / DSM 43183 / JCM 3096 / KCTC 9072 / NBRC 15933 / NCIMB 10081 / Henssen B9).